The sequence spans 318 residues: Formimidoylglutamase (318 aa).

6 residues coordinate Mn(2+): histidine 130, aspartate 155, histidine 157, aspartate 159, aspartate 246, and aspartate 248.

This sequence belongs to the arginase family. Mn(2+) serves as cofactor.

The enzyme catalyses N-formimidoyl-L-glutamate + H2O = formamide + L-glutamate. The protein operates within amino-acid degradation; L-histidine degradation into L-glutamate; L-glutamate from N-formimidoyl-L-glutamate (hydrolase route): step 1/1. Catalyzes the conversion of N-formimidoyl-L-glutamate to L-glutamate and formamide. This Klebsiella pneumoniae subsp. pneumoniae (strain ATCC 700721 / MGH 78578) protein is Formimidoylglutamase.